A 383-amino-acid chain; its full sequence is Sphingosine kinase 1 (383 aa).

Residues 12 to 159 (PRPCRVLVLL…MNLLSLHTAS (148 aa)) enclose the DAGKc domain. ATP is bound by residues 22–24 (NPR) and 54–58 (TERQN). A substrate-binding site is contributed by 79 to 82 (SGDG). Catalysis depends on D81, which acts as the Proton donor/acceptor. Residues E86 and 111 to 113 (GSG) contribute to the ATP site. 2 short sequence motifs (nuclear export signal) span residues 147–155 (LSPMNLLSL) and 161–169 (RQLYSVLSL). D178 is a binding site for substrate. Positions 185 and 191 each coordinate ATP. A Phosphothreonine modification is found at T193. Position 225 is a phosphoserine (S225). Residue 340–342 (DGE) participates in ATP binding. Residues 363-383 (GSSDSPSGRDSQRRPPPEEPI) form a disordered region. Positions 372–383 (DSQRRPPPEEPI) are enriched in basic and acidic residues.

Interacts with ACY1. Binds to calmodulin. Interacts with SPHKAP. Interacts with CIB1, the interaction occurs in a calcium-dependent manner. Interacts with TRAF2. Interacts with EEF1A1; the interaction enhances SPHK1 kinase activity. It depends on Mg(2+) as a cofactor. Expressed in microglia (at protein level).

It localises to the cytoplasm. The protein localises to the nucleus. It is found in the cell membrane. Its subcellular location is the endosome membrane. The protein resides in the membrane. It localises to the clathrin-coated pit. The protein localises to the synapse. The catalysed reaction is a sphingoid base + ATP = a sphingoid 1-phosphate + ADP + H(+). It catalyses the reaction L-seryl-[protein] + acetyl-CoA = O-acetyl-L-seryl-[protein] + CoA. It carries out the reaction sphinganine + ATP = sphinganine 1-phosphate + ADP + H(+). The enzyme catalyses sphing-4-enine + ATP = sphing-4-enine 1-phosphate + ADP + H(+). The catalysed reaction is 1-O-hexadecyl-2-amino-sn-glycerol + ATP = 1-O-hexadecyl-2-desoxy-2-amino-sn-glycero-3-phosphate + ADP + H(+). Acetyltransferase activity increases in presence of the kinase substrate, sphingosine. In Purkinje cells, kinase activity on sphingosine increases in presence of VEGFA. In neurons, kinase activity increases during the first 24h in presence of Amyloid-beta protein 42 to decrease after 96h. Its function is as follows. Catalyzes the phosphorylation of sphingosine to form sphingosine 1-phosphate (SPP), a lipid mediator with both intra- and extracellular functions. Also acts on D-erythro-sphingosine and to a lesser extent sphinganine, but not other lipids, such as D,L-threo-dihydrosphingosine, N,N-dimethylsphingosine, diacylglycerol, ceramide, or phosphatidylinositol. In contrast to proapoptotic SPHK2, has a negative effect on intracellular ceramide levels, enhances cell growth and inhibits apoptosis. Involved in the regulation of inflammatory response and neuroinflammation. Via the product sphingosine 1-phosphate, stimulates TRAF2 E3 ubiquitin ligase activity, and promotes activation of NF-kappa-B in response to TNF signaling leading to IL17 secretion. In response to TNF and in parallel to NF-kappa-B activation, negatively regulates RANTES induction through p38 MAPK signaling pathway. Involved in endocytic membrane trafficking induced by sphingosine, recruited to dilate endosomes, also plays a role on later stages of endosomal maturation and membrane fusion independently of its kinase activity. In Purkinje cells, seems to be also involved in the regulation of autophagosome-lysosome fusion upon VEGFA. In terms of biological role, has serine acetyltransferase activity on PTGS2/COX2 in an acetyl-CoA dependent manner. The acetyltransferase activity increases in presence of the kinase substrate, sphingosine. During neuroinflammation, through PTGS2 acetylation, promotes neuronal secretion of specialized preresolving mediators (SPMs), especially 15-R-lipoxin A4, which results in an increase of phagocytic microglia. This Rattus norvegicus (Rat) protein is Sphingosine kinase 1 (Sphk1).